We begin with the raw amino-acid sequence, 789 residues long: DNA topoisomerase 4 subunit A (789 aa).

The region spanning 34 to 499 (LPDLRDGLKP…EKQKVQDSDF (466 aa)) is the Topo IIA-type catalytic domain. The active-site O-(5'-phospho-DNA)-tyrosine intermediate is Tyr-122.

It belongs to the type II topoisomerase GyrA/ParC subunit family. ParC type 2 subfamily. Heterotetramer composed of ParC and ParE.

The protein resides in the cell membrane. It catalyses the reaction ATP-dependent breakage, passage and rejoining of double-stranded DNA.. Its function is as follows. Topoisomerase IV is essential for chromosome segregation. It relaxes supercoiled DNA. Performs the decatenation events required during the replication of a circular DNA molecule. The polypeptide is DNA topoisomerase 4 subunit A (Mycoplasma pneumoniae (strain ATCC 29342 / M129 / Subtype 1) (Mycoplasmoides pneumoniae)).